A 159-amino-acid polypeptide reads, in one-letter code: ATP synthase subunit b (159 aa).

A helical transmembrane segment spans residues I8–D28.

The protein belongs to the ATPase B chain family. In terms of assembly, F-type ATPases have 2 components, F(1) - the catalytic core - and F(0) - the membrane proton channel. F(1) has five subunits: alpha(3), beta(3), gamma(1), delta(1), epsilon(1). F(0) has three main subunits: a(1), b(2) and c(10-14). The alpha and beta chains form an alternating ring which encloses part of the gamma chain. F(1) is attached to F(0) by a central stalk formed by the gamma and epsilon chains, while a peripheral stalk is formed by the delta and b chains.

The protein localises to the cell membrane. In terms of biological role, f(1)F(0) ATP synthase produces ATP from ADP in the presence of a proton or sodium gradient. F-type ATPases consist of two structural domains, F(1) containing the extramembraneous catalytic core and F(0) containing the membrane proton channel, linked together by a central stalk and a peripheral stalk. During catalysis, ATP synthesis in the catalytic domain of F(1) is coupled via a rotary mechanism of the central stalk subunits to proton translocation. Its function is as follows. Component of the F(0) channel, it forms part of the peripheral stalk, linking F(1) to F(0). The sequence is that of ATP synthase subunit b from Clostridium perfringens (strain SM101 / Type A).